The chain runs to 185 residues: Elongation factor P (185 aa).

Belongs to the elongation factor P family.

It is found in the cytoplasm. It participates in protein biosynthesis; polypeptide chain elongation. Involved in peptide bond synthesis. Stimulates efficient translation and peptide-bond synthesis on native or reconstituted 70S ribosomes in vitro. Probably functions indirectly by altering the affinity of the ribosome for aminoacyl-tRNA, thus increasing their reactivity as acceptors for peptidyl transferase. This is Elongation factor P from Nitratidesulfovibrio vulgaris (strain DSM 19637 / Miyazaki F) (Desulfovibrio vulgaris).